The sequence spans 118 residues: Holo-[acyl-carrier-protein] synthase (118 aa).

Positions 8 and 58 each coordinate Mg(2+).

This sequence belongs to the P-Pant transferase superfamily. AcpS family. It depends on Mg(2+) as a cofactor.

It is found in the cytoplasm. It carries out the reaction apo-[ACP] + CoA = holo-[ACP] + adenosine 3',5'-bisphosphate + H(+). In terms of biological role, transfers the 4'-phosphopantetheine moiety from coenzyme A to a Ser of acyl-carrier-protein. The protein is Holo-[acyl-carrier-protein] synthase of Streptococcus equi subsp. zooepidemicus (strain H70).